Reading from the N-terminus, the 134-residue chain is Large ribosomal subunit protein uL16 (134 aa).

The span at 1 to 20 (MLLQPKRTKFRKMHKGRNRG) shows a compositional bias: basic residues. Positions 1-21 (MLLQPKRTKFRKMHKGRNRGT) are disordered.

The protein belongs to the universal ribosomal protein uL16 family. As to quaternary structure, part of the 50S ribosomal subunit.

Its function is as follows. Binds 23S rRNA and is also seen to make contacts with the A and possibly P site tRNAs. The chain is Large ribosomal subunit protein uL16 from Blochmanniella pennsylvanica (strain BPEN).